The chain runs to 1806 residues: uncharacterized protein (1806 aa).

Disordered stretches follow at residues 38–131 (EASG…SPLF) and 158–282 (KAVS…KPRP). Residues 51–70 (KSPLRSPARLLPLPRLAPKP) show a composition bias toward low complexity. Serine 52, serine 56, serine 79, serine 87, serine 88, serine 92, and serine 128 each carry phosphoserine. Positions 82–100 (PSLRPSSTGPSPSGGLSEE) are enriched in low complexity. The segment covering 226-236 (DTARPLVEPRP) has biased composition (basic and acidic residues). Phosphoserine occurs at positions 244 and 284. Disordered regions lie at residues 299-320 (RKVA…ERPR), 355-431 (KEKM…GGEW), 456-604 (SESP…PEDD), and 627-696 (QSGR…ELRP). The residue at position 366 (serine 366) is a Phosphoserine. Phosphothreonine is present on threonine 378. Residue serine 384 is modified to Phosphoserine. Over residues 386 to 400 (WEEKAKLDPEPEKAA) the composition is skewed to basic and acidic residues. At serine 404 the chain carries Phosphoserine. Positions 412–422 (ELAEVKSRVAD) are enriched in basic and acidic residues. Positions 456–470 (SESPLATPASPSAAP) are enriched in low complexity. Phosphoserine is present on residues serine 458 and serine 508. Residues 514–523 (LFSSSASSNE) show a composition bias toward polar residues. 2 stretches are compositionally biased toward basic and acidic residues: residues 524–549 (VKYE…EGHS) and 564–573 (TLRDKSRQTE). At threonine 600 the chain carries Phosphothreonine. Composition is skewed to basic and acidic residues over residues 641-652 (AHARVSEPRPRP) and 661-674 (DPPD…ENSR). Serine 749 carries the post-translational modification Phosphoserine. Disordered regions lie at residues 860–901 (QHEG…QART), 969–989 (SPHV…ALRK), and 1000–1019 (QEVN…KQGS). Residues 889 to 900 (RATNGPSDSQAR) show a composition bias toward polar residues. Serine 969 and serine 981 each carry phosphoserine. Positions 969–978 (SPHVGHRRTD) are enriched in basic and acidic residues. At threonine 1059 the chain carries Phosphothreonine. Phosphoserine is present on residues serine 1063 and serine 1154. The segment at 1134 to 1178 (RGSEDGPRPQSNWKESANKMSPSGGAPQTTPTLRSRPKDLPVRRK) is disordered. A compositionally biased stretch (polar residues) spans 1142 to 1166 (PQSNWKESANKMSPSGGAPQTTPTL). Threonine 1163 carries the phosphothreonine modification. Over residues 1169–1178 (RPKDLPVRRK) the composition is skewed to basic and acidic residues. Phosphothreonine occurs at positions 1179 and 1185. Disordered regions lie at residues 1216 to 1265 (PGEA…PASS) and 1291 to 1493 (KSSP…VASV). Phosphoserine is present on serine 1224. The residue at position 1226 (threonine 1226) is a Phosphothreonine. 2 stretches are compositionally biased toward basic and acidic residues: residues 1244-1254 (EQRRRSLKEMP) and 1317-1331 (DPRK…DRKA). Residue serine 1366 is modified to Phosphoserine. Composition is skewed to basic and acidic residues over residues 1393 to 1410 (DHPR…RAYS) and 1426 to 1437 (HEARERRREQPK). A Phosphoserine modification is found at serine 1441. A compositionally biased stretch (basic and acidic residues) spans 1462–1483 (DSHKVLPRDLEKEDAPQEKERP). Residues serine 1488 and serine 1506 each carry the phosphoserine modification. 2 disordered regions span residues 1512-1627 (QLKQ…KRVD) and 1642-1806 (ALKT…ENQV). The span at 1522–1531 (TEPKDTDTLV) shows a compositional bias: basic and acidic residues. Residues 1537-1568 (QYGTWTEQCQSGESLATESPDSSATSTRKQPP) show a composition bias toward polar residues. Serine 1555 and serine 1662 each carry phosphoserine. Over residues 1649-1666 (LSKRSRRRAPISHSLRRS) the composition is skewed to basic residues. Basic and acidic residues-rich tracts occupy residues 1667-1677 (RFSESESRSPL) and 1689-1714 (DSTE…ERTP). A phosphoserine mark is found at serine 1701, serine 1757, serine 1760, and serine 1786. Residues 1753–1764 (PQPKSPKSPFQP) show a composition bias toward low complexity.

This is an uncharacterized protein from Homo sapiens (Human).